Reading from the N-terminus, the 262-residue chain is tRNA pseudouridine synthase A (262 aa).

Aspartate 51 (nucleophile) is an active-site residue. Tyrosine 109 contacts substrate.

This sequence belongs to the tRNA pseudouridine synthase TruA family. As to quaternary structure, homodimer.

The catalysed reaction is uridine(38/39/40) in tRNA = pseudouridine(38/39/40) in tRNA. In terms of biological role, formation of pseudouridine at positions 38, 39 and 40 in the anticodon stem and loop of transfer RNAs. This chain is tRNA pseudouridine synthase A, found in Legionella pneumophila (strain Lens).